A 346-amino-acid polypeptide reads, in one-letter code: tRNA (guanine-N(7)-)-methyltransferase (346 aa).

S-adenosyl-L-methionine is bound by residues Gly101 and 124–125; that span reads EI. The tract at residues 149-191 is disordered; the sequence is LKSAGGGGSDAAPESPAAPPTPSEAASPDSTTPSEQQAPTTLV. Low complexity predominate over residues 171-182; that stretch reads SEAASPDSTTPS. Residues 204 to 205 and Cys224 contribute to the S-adenosyl-L-methionine site; that span reads NT. The active site involves Asp227. 318–320 provides a ligand contact to S-adenosyl-L-methionine; sequence TEE.

This sequence belongs to the class I-like SAM-binding methyltransferase superfamily. TrmB family. Forms a complex with trm82.

Its subcellular location is the nucleus. It catalyses the reaction guanosine(46) in tRNA + S-adenosyl-L-methionine = N(7)-methylguanosine(46) in tRNA + S-adenosyl-L-homocysteine. The protein operates within tRNA modification; N(7)-methylguanine-tRNA biosynthesis. Catalyzes the formation of N(7)-methylguanine at position 46 (m7G46) in tRNA. The protein is tRNA (guanine-N(7)-)-methyltransferase (trm8) of Aspergillus terreus (strain NIH 2624 / FGSC A1156).